Here is a 1282-residue protein sequence, read N- to C-terminus: Ribosome biogenesis protein BMS1 homolog (1282 aa).

Residues 1–24 (MEAKDQKKHRKKNSGPKAAKKKKR) show a composition bias toward basic residues. A disordered region spans residues 1-43 (MEAKDQKKHRKKNSGPKAAKKKKRLLQDLQLGDEEDARKRNPK). Residue K43 forms a Glycyl lysine isopeptide (Lys-Gly) (interchain with G-Cter in SUMO2) linkage. In terms of domain architecture, Bms1-type G spans 80 to 245 (PPPIVVVVMG…GRFITVMKFR (166 aa)). The segment at 89 to 96 (GPPKVGKS) is G1. 89-96 (GPPKVGKS) is a binding site for ATP. A G2 region spans residues 117–121 (PVTIV). Residues 132–135 (ECGC) are G3. The interval 184 to 187 (THLD) is G4. A Phosphoserine modification is found at S188. Positions 219 to 228 (LSGMVHGEYQ) are G5. Disordered stretches follow at residues 397–557 (DSKP…ANCQ) and 575–667 (PTFD…ALKW). Glycyl lysine isopeptide (Lys-Gly) (interchain with G-Cter in SUMO2) cross-links involve residues K399 and K415. Acidic residues-rich tracts occupy residues 434-472 (GDED…ENAE) and 503-531 (DSDD…EDCT). Residues 535 to 550 (KGISGSKAAGEGSKAG) show a composition bias toward low complexity. Phosphoserine is present on S552. Residues 588–610 (FASEDESEESSSLSAEEEDSENE) are compositionally biased toward acidic residues. A phosphoserine mark is found at S625 and S639. K646 participates in a covalent cross-link: Glycyl lysine isopeptide (Lys-Gly) (interchain with G-Cter in SUMO2). A compositionally biased stretch (basic and acidic residues) spans 653 to 667 (EENNDSKETSGALKW). A Phosphothreonine modification is found at T708. Disordered regions lie at residues 787–822 (ETGD…ESAK) and 1178–1202 (NKPK…IREP). K810 participates in a covalent cross-link: Glycyl lysine isopeptide (Lys-Gly) (interchain with G-Cter in SUMO1); alternate. K810 is covalently cross-linked (Glycyl lysine isopeptide (Lys-Gly) (interchain with G-Cter in SUMO2); alternate). K1206 is covalently cross-linked (Glycyl lysine isopeptide (Lys-Gly) (interchain with G-Cter in SUMO2)). Residues 1219 to 1282 (SQKMKKAKEQ…SLKGAEGQLQ (64 aa)) are disordered. Residues 1228 to 1248 (QRHLHNKEHFRAKQKEEEEKL) are compositionally biased toward basic and acidic residues. Residues 1249–1259 (KRQKDLRKKLF) are compositionally biased toward basic residues.

The protein belongs to the TRAFAC class translation factor GTPase superfamily. Bms1-like GTPase family. BMS1 subfamily. As to quaternary structure, part of the small subunit (SSU) processome, composed of more than 70 proteins and the RNA chaperone small nucleolar RNA (snoRNA) U3. Interacts with RCL1.

The protein resides in the nucleus. Its subcellular location is the nucleolus. It catalyses the reaction GTP + H2O = GDP + phosphate + H(+). GTPase required for the synthesis of 40S ribosomal subunits and for processing of pre-ribosomal RNA (pre-rRNA) at sites A0, A1, and A2. Controls access of pre-rRNA intermediates to RCL1 during ribosome biogenesis by binding RCL1 in a GTP-dependent manner, and delivering it to pre-ribosomes. GTP-binding and/or GTP hydrolysis may induce conformational rearrangements within the BMS1-RCL1 complex allowing the interaction of RCL1 with its RNA substrate. Required for RCL1 import into the nucleus. The sequence is that of Ribosome biogenesis protein BMS1 homolog from Homo sapiens (Human).